A 418-amino-acid polypeptide reads, in one-letter code: tRNA-2-methylthio-N(6)-dimethylallyladenosine synthase (418 aa).

Positions 1–118 constitute an MTTase N-terminal domain; the sequence is MNYLIETIGC…ALKIMNLFRT (118 aa). Positions 10, 46, 80, 143, 147, and 150 each coordinate [4Fe-4S] cluster. Residues 129–356 enclose the Radical SAM core domain; that stretch reads IKSKIVRYIT…LKESNKISIE (228 aa). Residues 359 to 418 enclose the TRAM domain; that stretch reads SEMLGSTQQVLAEEIKNGIIKARTKNGRKVFAEGRKEYIGKHINVNIKEAKINSLFGDIV.

This sequence belongs to the methylthiotransferase family. MiaB subfamily. Monomer. Requires [4Fe-4S] cluster as cofactor.

The protein resides in the cytoplasm. It catalyses the reaction N(6)-dimethylallyladenosine(37) in tRNA + (sulfur carrier)-SH + AH2 + 2 S-adenosyl-L-methionine = 2-methylsulfanyl-N(6)-dimethylallyladenosine(37) in tRNA + (sulfur carrier)-H + 5'-deoxyadenosine + L-methionine + A + S-adenosyl-L-homocysteine + 2 H(+). Functionally, catalyzes the methylthiolation of N6-(dimethylallyl)adenosine (i(6)A), leading to the formation of 2-methylthio-N6-(dimethylallyl)adenosine (ms(2)i(6)A) at position 37 in tRNAs that read codons beginning with uridine. This is tRNA-2-methylthio-N(6)-dimethylallyladenosine synthase from Endomicrobium trichonymphae.